The primary structure comprises 160 residues: NADH-quinone oxidoreductase subunit I (160 aa).

2 4Fe-4S ferredoxin-type domains span residues 51–81 (LRRYDDGEERCIACKLCEAICPAQAITIEAA) and 91–120 (VRYDIDMTKCIYCGFCQEACPVDAIVEGPN). 8 residues coordinate [4Fe-4S] cluster: C61, C64, C67, C71, C100, C103, C106, and C110.

Belongs to the complex I 23 kDa subunit family. As to quaternary structure, NDH-1 is composed of 14 different subunits. Subunits NuoA, H, J, K, L, M, N constitute the membrane sector of the complex. [4Fe-4S] cluster is required as a cofactor.

Its subcellular location is the cell inner membrane. It carries out the reaction a quinone + NADH + 5 H(+)(in) = a quinol + NAD(+) + 4 H(+)(out). In terms of biological role, NDH-1 shuttles electrons from NADH, via FMN and iron-sulfur (Fe-S) centers, to quinones in the respiratory chain. The immediate electron acceptor for the enzyme in this species is believed to be ubiquinone. Couples the redox reaction to proton translocation (for every two electrons transferred, four hydrogen ions are translocated across the cytoplasmic membrane), and thus conserves the redox energy in a proton gradient. The polypeptide is NADH-quinone oxidoreductase subunit I (Anaplasma marginale (strain St. Maries)).